The sequence spans 524 residues: GMP synthase [glutamine-hydrolyzing] (524 aa).

Residues 9–207 form the Glutamine amidotransferase type-1 domain; sequence RILILDFGSQ…VIHICQCIPN (199 aa). The Nucleophile role is filled by Cys86. Catalysis depends on residues His181 and Glu183. The GMPS ATP-PPase domain maps to 208-399; sequence WTTKHIIEDS…LGLPADLIYR (192 aa). Residue 235-241 participates in ATP binding; that stretch reads SGGVDSA.

As to quaternary structure, homodimer.

The enzyme catalyses XMP + L-glutamine + ATP + H2O = GMP + L-glutamate + AMP + diphosphate + 2 H(+). It functions in the pathway purine metabolism; GMP biosynthesis; GMP from XMP (L-Gln route): step 1/1. Catalyzes the synthesis of GMP from XMP. The chain is GMP synthase [glutamine-hydrolyzing] from Coxiella burnetii (strain RSA 493 / Nine Mile phase I).